The sequence spans 216 residues: Probable GTP-binding protein EngB (216 aa).

The 175-residue stretch at Glu23–Leu197 folds into the EngB-type G domain. GTP-binding positions include Gly31–Ser38, Gly58–Leu62, Asp76–Gly79, Thr143–Asp146, and Phe176–Ser178. Positions 38 and 60 each coordinate Mg(2+).

This sequence belongs to the TRAFAC class TrmE-Era-EngA-EngB-Septin-like GTPase superfamily. EngB GTPase family. Mg(2+) serves as cofactor.

Its function is as follows. Necessary for normal cell division and for the maintenance of normal septation. The polypeptide is Probable GTP-binding protein EngB (Aromatoleum aromaticum (strain DSM 19018 / LMG 30748 / EbN1) (Azoarcus sp. (strain EbN1))).